The primary structure comprises 139 residues: Protein archease (139 aa).

Residues D12, D138, and I139 each contribute to the Ca(2+) site.

Belongs to the archease family.

Activates the tRNA-splicing ligase complex by facilitating the enzymatic turnover of catalytic subunit RtcB. Acts by promoting the guanylylation of RtcB, a key intermediate step in tRNA ligation. Can also alter the NTP specificity of RtcB such that ATP, dGTP or ITP is used efficiently. The chain is Protein archease from Saccharolobus solfataricus (strain ATCC 35092 / DSM 1617 / JCM 11322 / P2) (Sulfolobus solfataricus).